The following is an 82-amino-acid chain: Putative membrane protein insertion efficiency factor (82 aa).

The protein belongs to the UPF0161 family.

Its subcellular location is the cell inner membrane. In terms of biological role, could be involved in insertion of integral membrane proteins into the membrane. The polypeptide is Putative membrane protein insertion efficiency factor (Francisella tularensis subsp. holarctica (strain LVS)).